A 250-amino-acid polypeptide reads, in one-letter code: Oil body-associated protein 2B (250 aa).

Residues 1 to 29 (MSSSDQNPAATPASSGPAEPSPPGRPTAV) are disordered. Residues 8-18 (PAATPASSGPA) show a composition bias toward low complexity.

The protein belongs to the OBAP family.

In Zea mays (Maize), this protein is Oil body-associated protein 2B.